The primary structure comprises 429 residues: UDP-N-acetylglucosamine 1-carboxyvinyltransferase (429 aa).

22–23 serves as a coordination point for phosphoenolpyruvate; sequence KN. UDP-N-acetyl-alpha-D-glucosamine is bound at residue R102. The active-site Proton donor is the C126. Position 126 is a 2-(S-cysteinyl)pyruvic acid O-phosphothioketal (C126). Residues 131–135, D316, and I338 each bind UDP-N-acetyl-alpha-D-glucosamine; that span reads RPVDL.

Belongs to the EPSP synthase family. MurA subfamily.

It localises to the cytoplasm. It carries out the reaction phosphoenolpyruvate + UDP-N-acetyl-alpha-D-glucosamine = UDP-N-acetyl-3-O-(1-carboxyvinyl)-alpha-D-glucosamine + phosphate. The protein operates within cell wall biogenesis; peptidoglycan biosynthesis. Functionally, cell wall formation. Adds enolpyruvyl to UDP-N-acetylglucosamine. The polypeptide is UDP-N-acetylglucosamine 1-carboxyvinyltransferase (Methylocella silvestris (strain DSM 15510 / CIP 108128 / LMG 27833 / NCIMB 13906 / BL2)).